Consider the following 347-residue polypeptide: 4-hydroxy-2-oxovalerate aldolase 2 (347 aa).

A Pyruvate carboxyltransferase domain is found at 9–259; sequence ITIVDTTLRD…DTGVDLFPLI (251 aa). Residues 17–18, S171, and H198 contribute to the substrate site; that span reads RD. Residue D18 participates in Mn(2+) binding. Mn(2+) contacts are provided by H198 and H200. Position 289 (Y289) interacts with substrate.

This sequence belongs to the 4-hydroxy-2-oxovalerate aldolase family.

It carries out the reaction (S)-4-hydroxy-2-oxopentanoate = acetaldehyde + pyruvate. The sequence is that of 4-hydroxy-2-oxovalerate aldolase 2 from Rhodococcus opacus (strain B4).